A 91-amino-acid polypeptide reads, in one-letter code: uncharacterized protein (91 aa).

A signal peptide spans 1–21 (MKIISKMLVGALALAVTNVYA).

This sequence belongs to the BhsA/McbA family.

The protein resides in the periplasm. This is an uncharacterized protein from Escherichia coli (strain K12).